A 338-amino-acid polypeptide reads, in one-letter code: MKVYYDKDADLSLIKGKKVTIVGYGSQGHAHAQNLKDSGVKVTVGLRKDGASWKKAEAAGLKVEEIAKAVKGADVVMILLPDENIPQVYNEEVAPNLKKGAALAFAHGFNVHYNQVVPRADVDVIMVAPKGPGHTVRSEYLKGGGVPSLIAVYQDVTKKAKDIALSYAAANGGTKGGVIETNFREETETDLFGEQAVLCGGAVELVKMGFETLTEAGYAPEMAYFECLHELKLIVDLMYEGGIANMNYSISNNAEYGEYVTGTEVINEQSRVAMRNALKRIQTGEYAKMFIQEGKTNYPSMTARRRLNAVHPIETVGGQLRDMMPWIRKNKLVDQTKN.

One can recognise a KARI N-terminal Rossmann domain in the interval Met-1–Thr-181. NADP(+) is bound by residues Tyr-24–Gln-27, Arg-47, and Ser-52. Residue His-107 is part of the active site. Gly-133 contacts NADP(+). A KARI C-terminal knotted domain is found at Asn-182–Ile-327. Residues Asp-190, Glu-194, Glu-226, and Glu-230 each contribute to the Mg(2+) site. Ser-251 contributes to the substrate binding site.

This sequence belongs to the ketol-acid reductoisomerase family. The cofactor is Mg(2+).

It carries out the reaction (2R)-2,3-dihydroxy-3-methylbutanoate + NADP(+) = (2S)-2-acetolactate + NADPH + H(+). It catalyses the reaction (2R,3R)-2,3-dihydroxy-3-methylpentanoate + NADP(+) = (S)-2-ethyl-2-hydroxy-3-oxobutanoate + NADPH + H(+). It functions in the pathway amino-acid biosynthesis; L-isoleucine biosynthesis; L-isoleucine from 2-oxobutanoate: step 2/4. The protein operates within amino-acid biosynthesis; L-valine biosynthesis; L-valine from pyruvate: step 2/4. In terms of biological role, involved in the biosynthesis of branched-chain amino acids (BCAA). Catalyzes an alkyl-migration followed by a ketol-acid reduction of (S)-2-acetolactate (S2AL) to yield (R)-2,3-dihydroxy-isovalerate. In the isomerase reaction, S2AL is rearranged via a Mg-dependent methyl migration to produce 3-hydroxy-3-methyl-2-ketobutyrate (HMKB). In the reductase reaction, this 2-ketoacid undergoes a metal-dependent reduction by NADPH to yield (R)-2,3-dihydroxy-isovalerate. The protein is Ketol-acid reductoisomerase (NADP(+)) of Dechloromonas aromatica (strain RCB).